The following is a 213-amino-acid chain: Ribosomal RNA small subunit methyltransferase G (213 aa).

S-adenosyl-L-methionine is bound by residues Gly-83, Leu-88, 132–133 (IE), and Arg-146.

This sequence belongs to the methyltransferase superfamily. RNA methyltransferase RsmG family.

The protein localises to the cytoplasm. The catalysed reaction is guanosine(527) in 16S rRNA + S-adenosyl-L-methionine = N(7)-methylguanosine(527) in 16S rRNA + S-adenosyl-L-homocysteine. Functionally, specifically methylates the N7 position of guanine in position 527 of 16S rRNA. The sequence is that of Ribosomal RNA small subunit methyltransferase G from Granulibacter bethesdensis (strain ATCC BAA-1260 / CGDNIH1).